Reading from the N-terminus, the 475-residue chain is GTPase Der (475 aa).

EngA-type G domains are found at residues 3–167 and 205–380; these read LTIA…GGER and LRIA…RVWN. Residues 9 to 16, 56 to 60, 119 to 122, 211 to 218, 258 to 262, and 323 to 326 contribute to the GTP site; these read GRPNVGKS, DTAGL, NKSE, GRPNTGKS, and NKWD. In terms of domain architecture, KH-like spans 381–465; the sequence is RRISTGKLNR…PIRISLRASD (85 aa).

It belongs to the TRAFAC class TrmE-Era-EngA-EngB-Septin-like GTPase superfamily. EngA (Der) GTPase family. As to quaternary structure, associates with the 50S ribosomal subunit.

In terms of biological role, GTPase that plays an essential role in the late steps of ribosome biogenesis. This chain is GTPase Der, found in Bartonella henselae (strain ATCC 49882 / DSM 28221 / CCUG 30454 / Houston 1) (Rochalimaea henselae).